The chain runs to 103 residues: Large ribosomal subunit protein uL24 (103 aa).

It belongs to the universal ribosomal protein uL24 family. As to quaternary structure, part of the 50S ribosomal subunit.

Functionally, one of two assembly initiator proteins, it binds directly to the 5'-end of the 23S rRNA, where it nucleates assembly of the 50S subunit. Its function is as follows. One of the proteins that surrounds the polypeptide exit tunnel on the outside of the subunit. The chain is Large ribosomal subunit protein uL24 from Actinobacillus pleuropneumoniae serotype 5b (strain L20).